Consider the following 240-residue polypeptide: MSELSYRRILLKLSGEALMGDGDYGIDPKVINRLAHEVIEAQQAGAQVALVIGGGNIFRGAGLAASGMDRVTGDHMGMLATVINALAMQDALEKLGAKVRVMSAIKINDVCEDFIRRRAIRHLEKGRIAIFAAGTGNPFFTTDSGAALRAIEIGADLLLKATKVDGVYDKDPKKHTDAVRYDSLTYDQVIMQDLEVMDTAAFALARDSDLPLRIFGMSEPGVLLRILHGEQIGTLVQGRS.

Residue 12–15 coordinates ATP; that stretch reads KLSG. Residue G54 coordinates UMP. G55 and R59 together coordinate ATP. UMP is bound by residues D74 and 135 to 142; that span reads TGNPFFTT. Residues T162, Y168, and D171 each coordinate ATP.

Belongs to the UMP kinase family. In terms of assembly, homohexamer.

It is found in the cytoplasm. It carries out the reaction UMP + ATP = UDP + ADP. Its pathway is pyrimidine metabolism; CTP biosynthesis via de novo pathway; UDP from UMP (UMPK route): step 1/1. Inhibited by UTP. Functionally, catalyzes the reversible phosphorylation of UMP to UDP. The polypeptide is Uridylate kinase (Xanthomonas oryzae pv. oryzae (strain KACC10331 / KXO85)).